Reading from the N-terminus, the 101-residue chain is DNA-binding protein Fis (101 aa).

Positions 77–96 (QTRAANMLGINRGTLRKKLK) form a DNA-binding region, H-T-H motif.

This sequence belongs to the transcriptional regulatory Fis family. In terms of assembly, homodimer.

Functionally, activates ribosomal RNA transcription. Plays a direct role in upstream activation of rRNA promoters. The polypeptide is DNA-binding protein Fis (Shewanella frigidimarina (strain NCIMB 400)).